We begin with the raw amino-acid sequence, 408 residues long: Cobalt-precorrin-5B C(1)-methyltransferase (408 aa).

This sequence belongs to the CbiD family.

The catalysed reaction is Co-precorrin-5B + S-adenosyl-L-methionine = Co-precorrin-6A + S-adenosyl-L-homocysteine. It functions in the pathway cofactor biosynthesis; adenosylcobalamin biosynthesis; cob(II)yrinate a,c-diamide from sirohydrochlorin (anaerobic route): step 6/10. Functionally, catalyzes the methylation of C-1 in cobalt-precorrin-5B to form cobalt-precorrin-6A. This Clostridioides difficile (strain 630) (Peptoclostridium difficile) protein is Cobalt-precorrin-5B C(1)-methyltransferase.